We begin with the raw amino-acid sequence, 847 residues long: B-cell receptor CD22 (847 aa).

Residues 1-19 (MHLLGPWLLLLVLEYLAFS) form the signal peptide. The region spanning 20–138 (DSSKWAFEHP…MERIHLNVSE (119 aa)) is the Ig-like V-type domain. Over 20–687 (DSSKWAFEHP…YYSPETIGRR (668 aa)) the chain is Extracellular. N67, N101, and N112 each carry an N-linked (GlcNAc...) asparagine glycan. R120 contacts N-acetylneuraminate. Residues N135, N164, and N231 are each glycosylated (N-linked (GlcNAc...) asparagine). 6 Ig-like C2-type domains span residues 143–235 (PHIQ…DTVQ), 242–326 (PKLE…VFLQ), 331–416 (PEPS…LDVQ), 419–500 (PKKV…VALN), 505–582 (PRDV…QTAS), and 593–676 (PRRL…STLT). An intrachain disulfide couples C161 to C219. 2 disulfides stabilise this stretch: C265/C309 and C353/C396. N-linked (GlcNAc...) asparagine glycosylation is found at N363, N428, N445, N448, and N479. Intrachain disulfides connect C442-C484 and C529-C571. N-linked (GlcNAc...) asparagine glycosylation is found at N574 and N634. Cysteines 616 and 659 form a disulfide. A helical transmembrane segment spans residues 688–708 (VAVGFGSCLAILILAICGLKL). At 709-847 (QRRWKRTQSQ…ENVDYVILKH (139 aa)) the chain is on the cytoplasmic side. Residues S725, S726, and S729 each carry the phosphoserine modification. 2 consecutive short sequence motifs (ITIM motif) follow at residues 760–765 (ISYTTL) and 794–799 (VTYSVL). Phosphotyrosine is present on Y762. A phosphotyrosine mark is found at Y807, Y822, and Y842. 2 short sequence motifs (ITIM motif) span residues 820–825 (IHYSEL) and 840–845 (VDYVIL).

This sequence belongs to the immunoglobulin superfamily. SIGLEC (sialic acid binding Ig-like lectin) family. In terms of assembly, predominantly monomer of isoform CD22-beta. Also found as heterodimer of isoform CD22-beta and a shorter isoform. Interacts with PTPN6/SHP-1, LYN, SYK, PIK3R1/PIK3R2 and PLCG1 upon phosphorylation. Interacts with GRB2, INPP5D and SHC1 upon phosphorylation. May form a complex with INPP5D/SHIP, GRB2 and SHC1. Phosphorylation of Tyr-762, Tyr-807 and Tyr-822 are involved in binding to SYK, GRB2 and SYK, respectively. Phosphorylation of Tyr-842 is involved in binding to SYK, PLCG2 and PIK3R1/PIK3R2. In terms of processing, phosphorylated on tyrosine residues by LYN.

The protein localises to the cell membrane. In terms of biological role, most highly expressed siglec (sialic acid-binding immunoglobulin-like lectin) on B-cells that plays a role in various aspects of B-cell biology including differentiation, antigen presentation, and trafficking to bone marrow. Binds to alpha 2,6-linked sialic acid residues of surface molecules such as CD22 itself, CD45 and IgM in a cis configuration. Can also bind to ligands on other cells as an adhesion molecule in a trans configuration. Acts as an inhibitory coreceptor on the surface of B-cells and inhibits B-cell receptor induced signaling, characterized by inhibition of the calcium mobilization and cellular activation. Mechanistically, the immunoreceptor tyrosine-based inhibitory motif domain is phosphorylated by the Src kinase LYN, which in turn leads to the recruitment of the protein tyrosine phosphatase 1/PTPN6, leading to the negative regulation of BCR signaling. If this negative signaling from is of sufficient strength, apoptosis of the B-cell can be induced. This chain is B-cell receptor CD22, found in Pan paniscus (Pygmy chimpanzee).